A 145-amino-acid chain; its full sequence is D-aminoacyl-tRNA deacylase (145 aa).

A Gly-cisPro motif, important for rejection of L-amino acids motif is present at residues 137–138; the sequence is GP.

Belongs to the DTD family. Homodimer.

Its subcellular location is the cytoplasm. It carries out the reaction glycyl-tRNA(Ala) + H2O = tRNA(Ala) + glycine + H(+). The enzyme catalyses a D-aminoacyl-tRNA + H2O = a tRNA + a D-alpha-amino acid + H(+). Its function is as follows. An aminoacyl-tRNA editing enzyme that deacylates mischarged D-aminoacyl-tRNAs. Also deacylates mischarged glycyl-tRNA(Ala), protecting cells against glycine mischarging by AlaRS. Acts via tRNA-based rather than protein-based catalysis; rejects L-amino acids rather than detecting D-amino acids in the active site. By recycling D-aminoacyl-tRNA to D-amino acids and free tRNA molecules, this enzyme counteracts the toxicity associated with the formation of D-aminoacyl-tRNA entities in vivo and helps enforce protein L-homochirality. This chain is D-aminoacyl-tRNA deacylase, found in Pseudomonas aeruginosa (strain LESB58).